The chain runs to 263 residues: Troponin T, slow skeletal muscle (263 aa).

Positions 1–38 (MSDAEEQEYEEEQPEEEEAAEEEEEAPEEPEPAAEPEE) are enriched in acidic residues. Disordered stretches follow at residues 1–64 (MSDA…RVDF) and 109–154 (AERA…KKKV). Serine 2 is subject to Phosphoserine; by CK2. The span at 44-56 (SRPVVPPLIPPKI) shows a compositional bias: pro residues. Residues 109 to 150 (AERAEQQRFRTEKERERQAKLAEEKMRKEEEEAKKRAEDDAK) are compositionally biased toward basic and acidic residues.

The protein belongs to the troponin T family. Interacts with TPM3. As to expression, expressed dominantly in slow muscles, like masseter, diaphragm, psoas major and spinnalis. Isoform 2 is also expressed in fast muscles.

Its function is as follows. Troponin T is the tropomyosin-binding subunit of troponin, the thin filament regulatory complex which confers calcium-sensitivity to striated muscle actomyosin ATPase activity. The polypeptide is Troponin T, slow skeletal muscle (TNNT1) (Bos taurus (Bovine)).